We begin with the raw amino-acid sequence, 71 residues long: MKQGIHPEMKLITVKCACGAEHTMYSTVDNFRLDVCSECHPFYRGELGSQILDTEGRVQKFKNKYKDFLEN.

C16, C18, C36, and C39 together coordinate Zn(2+).

This sequence belongs to the bacterial ribosomal protein bL31 family. Type A subfamily. In terms of assembly, part of the 50S ribosomal subunit. Zn(2+) serves as cofactor.

Functionally, binds the 23S rRNA. The chain is Large ribosomal subunit protein bL31 from Petrotoga mobilis (strain DSM 10674 / SJ95).